We begin with the raw amino-acid sequence, 91 residues long: Small ribosomal subunit protein bS18 (91 aa).

It belongs to the bacterial ribosomal protein bS18 family. Part of the 30S ribosomal subunit. Forms a tight heterodimer with protein bS6.

Functionally, binds as a heterodimer with protein bS6 to the central domain of the 16S rRNA, where it helps stabilize the platform of the 30S subunit. This Syntrophotalea carbinolica (strain DSM 2380 / NBRC 103641 / GraBd1) (Pelobacter carbinolicus) protein is Small ribosomal subunit protein bS18.